Reading from the N-terminus, the 464-residue chain is MAMTAGATTTFPMSNHTRERVTVAKLTLENFYSNLILQHEERETRQKKLEVAMEEEGLADEEKKLRRSQHARKETEFLRLKRTRLGLDDFESLKVIGRGAFGEVRLVQKKDTGHIYAMKILRKADMLEKEQVAHIRAERDILVEADGAWVVKMFYSFQDKRNLYLIMEFLPGGDMMTLLMKKDTLTEEETQFYISETVLAIDAIHQLGFIHRDVKPDNLLLDAKGHVKLSDFGLCTGLKKAHRTEFYRNLTHNPPSDFSFQNMNSKRKAETWKKNRRQLAYSTVGTPDYIAPEVFMQTGYNKLCDWWSLGVIMYEMLIGFPPFCSETPQETYRKVMSWKETLAFPPEVPVSEKAKDLILRFCTDSENRIGNGGVEEIKGHPFFEGVDWGHIRERPAAIPIEIRSIDDTSNFDDFPESDILQPVPNTTEPDYKSKDWVFLNYTYKRFEGLTQRGSIPTYMKAGKL.

Ala-2 is modified (N-acetylalanine). Positions Lys-64–Asp-89 are S100B binding. Thr-75 carries the post-translational modification Phosphothreonine. Positions Phe-90 to Phe-383 constitute a Protein kinase domain. ATP is bound by residues Ile-96 to Val-104 and Lys-119. Asp-213 acts as the Proton acceptor in catalysis. Ser-282 carries the post-translational modification Phosphoserine; by autocatalysis. The AGC-kinase C-terminal domain occupies Glu-384–Gly-453. The residue at position 442 (Thr-442) is a Phosphothreonine; by STK24/MST3.

This sequence belongs to the protein kinase superfamily. AGC Ser/Thr protein kinase family. Homodimeric S100B binds two molecules of STK38L. Interacts with MOB1 and MOB2. Interacts with MICAL1; leading to inhibit the protein kinase activity by antagonizing activation by MST1/STK4. Mg(2+) serves as cofactor. In terms of tissue distribution, highly expressed in the large and small intestine, stomach and testis. High levels also present in the brain, in particular the neurocortex, basal forebrain, hippocampus, the amygdala, cerebellum and brainstem.

It is found in the cytoplasm. The protein resides in the cytoskeleton. It localises to the membrane. It carries out the reaction L-seryl-[protein] + ATP = O-phospho-L-seryl-[protein] + ADP + H(+). It catalyses the reaction L-threonyl-[protein] + ATP = O-phospho-L-threonyl-[protein] + ADP + H(+). Activated by binding of S100B which releases autoinhibitory N-lobe interactions, enabling ATP to bind and the autophosphorylation of Ser-282. Thr-442 then undergoes calcium-dependent phosphorylation by STK24/MST3. Interactions between phosphorylated Thr-442 and the N-lobe promote additional structural changes that complete the activation of the kinase. Autoinhibition is also released by the binding of MOB1/MOBKL1A and MOB2 to the N-terminal of STK38L. Its function is as follows. Involved in the regulation of structural processes in differentiating and mature neuronal cells. This Mus musculus (Mouse) protein is Serine/threonine-protein kinase 38-like.